A 301-amino-acid polypeptide reads, in one-letter code: Hydroxymycolate synthase MmaA4 (301 aa).

S-adenosyl-L-methionine is bound by residues 42–43 (YS), 81–83 (GCG), 103–108 (TLSKNQ), 132–133 (WE), and Ile-145. The active site involves Cys-278.

This sequence belongs to the CFA/CMAS family. In terms of assembly, monomer.

It functions in the pathway lipid metabolism; mycolic acid biosynthesis. Its activity is regulated as follows. Inhibited by S-adenosyl-N-decyl-aminoethyl (SADAE). Involved in the biosynthesis of hydroxymycolate, a common precursor of oxygenated mycolic acids (methoxy-mycolate and keto-mycolate). Probably transfers a methyl group from the S-adenosylmethionine (SAM) cofactor and, subsequently or simultaneously, a water molecule onto the double bound of ethylene substrates, leading to the formation of the hydroxylated product at the distal position. Involved in the activation of the antitubercular drug thiacetazone (TAC). This Mycobacterium tuberculosis (strain ATCC 25618 / H37Rv) protein is Hydroxymycolate synthase MmaA4 (mmaA4).